A 210-amino-acid chain; its full sequence is MSEKIGILGQKLGMTQVFGGNGFAVPVTVVQAGPCPIVQIKTVEKEGYNALQIAFGEGKKKHVSKSMQGHFSKAGLSLYRKIQEVRLKGSLTSYEVGQVLTVGLFSVGDKVKITGKSIGKGFQGAMRRWNFAGSKDSHGCEKVHRAAGSIGNNTFPGHVFKGKKMAGHWGTEKVTVQNLVVVDIRPEDNIILIHGSVPGPKNSFLFISMQ.

This sequence belongs to the universal ribosomal protein uL3 family. As to quaternary structure, part of the 50S ribosomal subunit. Forms a cluster with proteins L14 and L19.

Its function is as follows. One of the primary rRNA binding proteins, it binds directly near the 3'-end of the 23S rRNA, where it nucleates assembly of the 50S subunit. The sequence is that of Large ribosomal subunit protein uL3 from Lawsonia intracellularis (strain PHE/MN1-00).